Reading from the N-terminus, the 313-residue chain is ADP,ATP carrier protein (313 aa).

3 Solcar repeats span residues 11–104 (PPFV…FKKM), 116–208 (KWMA…IKPV), and 216–302 (NNFL…LQVL). 5 helical membrane-spanning segments follow: residues 13-40 (FVAD…IKLL), 81-105 (TANV…KKMF), 114-134 (YWKW…TSLL), 184-205 (FGPS…YDSI), and 219-239 (LASF…SYPL). Arg86 and Arg98 together coordinate ADP. Arg243 contributes to the ADP binding site. The segment at 243 to 248 (RRRMMM) is important for transport activity. The Nucleotide carrier signature motif motif lies at 243–248 (RRRMMM). A helical membrane pass occupies residues 279 to 299 (AGANILRGVAGAGVLSIYDQL).

Belongs to the mitochondrial carrier (TC 2.A.29) family. In terms of assembly, monomer.

It localises to the mitochondrion inner membrane. It carries out the reaction ADP(in) + ATP(out) = ADP(out) + ATP(in). Its activity is regulated as follows. The matrix-open state (m-state) is inhibited by the membrane-permeable bongkrekic acid (BKA). The cytoplasmic-open state (c-state) is inhibited by the membrane-impermeable toxic inhibitor carboxyatractyloside (CATR). ADP:ATP antiporter that mediates import of ADP into the mitochondrial matrix for ATP synthesis, and export of ATP out to fuel the cell. Cycles between the cytoplasmic-open state (c-state) and the matrix-open state (m-state): operates by the alternating access mechanism with a single substrate-binding site intermittently exposed to either the cytosolic (c-state) or matrix (m-state) side of the inner mitochondrial membrane. In Neurospora crassa (strain ATCC 24698 / 74-OR23-1A / CBS 708.71 / DSM 1257 / FGSC 987), this protein is ADP,ATP carrier protein (aac).